Here is a 358-residue protein sequence, read N- to C-terminus: Chorismate synthase (358 aa).

Residues Arg48 and Arg54 each coordinate NADP(+). Residues 125 to 127, Gly282, 297 to 301, and Arg323 contribute to the FMN site; these read RSS and KPPAS.

Belongs to the chorismate synthase family. As to quaternary structure, homotetramer. Requires FMNH2 as cofactor.

The catalysed reaction is 5-O-(1-carboxyvinyl)-3-phosphoshikimate = chorismate + phosphate. The protein operates within metabolic intermediate biosynthesis; chorismate biosynthesis; chorismate from D-erythrose 4-phosphate and phosphoenolpyruvate: step 7/7. Its function is as follows. Catalyzes the anti-1,4-elimination of the C-3 phosphate and the C-6 proR hydrogen from 5-enolpyruvylshikimate-3-phosphate (EPSP) to yield chorismate, which is the branch point compound that serves as the starting substrate for the three terminal pathways of aromatic amino acid biosynthesis. This reaction introduces a second double bond into the aromatic ring system. The polypeptide is Chorismate synthase (Roseiflexus castenholzii (strain DSM 13941 / HLO8)).